We begin with the raw amino-acid sequence, 85 residues long: Conotoxin MaIr94 (85 aa).

The N-terminal stretch at 1–22 (MKLTCVLIITVLFLTACQLTAA) is a signal peptide. A propeptide spanning residues 23–49 (GNSRDKQEDPVVRSSGEVQRSEDIKLA) is cleaved from the precursor. Intrachain disulfides connect C52/C69, C59/C73, and C68/C84.

This sequence belongs to the conotoxin O1 superfamily. In terms of tissue distribution, expressed by the venom duct.

The protein localises to the secreted. Produces no obvious effect on ionic currents when tested on the mouse dorsal rooted ganglia (DRG). This is Conotoxin MaIr94 from Conus marmoreus (Marble cone).